The chain runs to 286 residues: Pyridoxal kinase PdxY (286 aa).

Residues Ser9 and 44-45 (TQ) contribute to the substrate site. Residues Asp111, Glu148, and Lys181 each contribute to the ATP site. Asp222 is a binding site for substrate.

The protein belongs to the pyridoxine kinase family. PdxY subfamily. Homodimer. Mg(2+) serves as cofactor.

It catalyses the reaction pyridoxal + ATP = pyridoxal 5'-phosphate + ADP + H(+). It functions in the pathway cofactor metabolism; pyridoxal 5'-phosphate salvage; pyridoxal 5'-phosphate from pyridoxal: step 1/1. Functionally, pyridoxal kinase involved in the salvage pathway of pyridoxal 5'-phosphate (PLP). Catalyzes the phosphorylation of pyridoxal to PLP. This Actinobacillus succinogenes (strain ATCC 55618 / DSM 22257 / CCUG 43843 / 130Z) protein is Pyridoxal kinase PdxY.